Reading from the N-terminus, the 330-residue chain is tRNA U34 carboxymethyltransferase (330 aa).

Residues K91, W105, K110, G130, D152–S154, I181–E182, M196, Y200, and R315 each bind carboxy-S-adenosyl-L-methionine.

The protein belongs to the class I-like SAM-binding methyltransferase superfamily. CmoB family. In terms of assembly, homotetramer.

The enzyme catalyses carboxy-S-adenosyl-L-methionine + 5-hydroxyuridine(34) in tRNA = 5-carboxymethoxyuridine(34) in tRNA + S-adenosyl-L-homocysteine + H(+). Catalyzes carboxymethyl transfer from carboxy-S-adenosyl-L-methionine (Cx-SAM) to 5-hydroxyuridine (ho5U) to form 5-carboxymethoxyuridine (cmo5U) at position 34 in tRNAs. This chain is tRNA U34 carboxymethyltransferase, found in Shewanella sp. (strain ANA-3).